The primary structure comprises 140 residues: uncharacterized protein (140 aa).

The segment covering 1 to 19 (MGLCGSKTQPMPSQTTTVA) has biased composition (polar residues). Residues 1 to 140 (MGLCGSKTQP…ERERENMIYD (140 aa)) form a disordered region. Residue Gly-2 is the site of N-myristoyl glycine attachment. Residue Cys-4 is the site of S-palmitoyl cysteine attachment. The span at 27–40 (INRDTVKSKQELRH) shows a compositional bias: basic and acidic residues. Residues 41–51 (KEKKDKKKKTQ) are compositionally biased toward basic residues. The span at 73 to 140 (DPSKNKVSPK…ERERENMIYD (68 aa)) shows a compositional bias: basic and acidic residues.

This sequence to S.pombe new13. Myristoylated. Post-translationally, the N-myristoylated protein is further palmitoylated by ERF2, PFA4 and slightly by PFA5, but not by PFA3.

It is found in the cytoplasm. It localises to the cytosol. This is an uncharacterized protein from Saccharomyces cerevisiae (strain ATCC 204508 / S288c) (Baker's yeast).